Consider the following 462-residue polypeptide: MEASNQDEIIGTDVIPNEQDNPEEVVPEPTSLDVPPPPPERAPSAPKRVEILDCNSLNGLMYHYFAQGDYIECKSIIGEIQSKYLERNEAAFHVRGLIARNEGELEEAMECFHKAYELSGKNKRYFYETGRCNFLLGRHQIAVEQLTKASEVMKDNPKVWYWLARAIYHFPAEKVQGKTFNPVESARTILMKPDIAKDATLICFLGRLCEELGDTSGAIAAYKSSLKLQPDNTEVMNLLGLIYLRTGQVQEGFVQLGNCLAYDPANSQAILTIGSIMQNHSDHDVALNKYRVAADVSDYNGCLWNNIGIGLLARNKPAASHSALKKAAFINPLNYKISYNLGVLHDIMNLHCSALHYIKLCTELYPQNAKAVGAMAVILSHMNDDKNARLAYKKSIELKKNPSTILNYAIFEYRMKDVTAASNALKLYKDLQASGVKCSANNKETANLLESVLKQPDQSAEQ.

The segment at 1–46 (MEASNQDEIIGTDVIPNEQDNPEEVVPEPTSLDVPPPPPERAPSAP) is disordered. TPR repeat units lie at residues 89 to 122 (EAAF…SGKN), 124 to 156 (RYFY…MKDN), 199 to 232 (ATLI…QPDN), 234 to 266 (EVMN…DPAN), 268 to 300 (QAIL…SDYN), 335 to 368 (YKIS…YPQN), and 369 to 402 (AKAV…KKNP).

Belongs to the BBS4 family. Part of BBSome complex, that contains at least bbs-1, bbs-2, bbs-4, bbs-5, osm-12, bbs-8/ttc-8 and bbs-9. Interacts (via C-terminus) with bbs-5; the interaction is direct.

It is found in the cytoplasm. The protein localises to the cytoskeleton. It localises to the microtubule organizing center. Its subcellular location is the centrosome. The protein resides in the cell projection. It is found in the cilium membrane. Functionally, component of the BBSome complex. The BBSome complex is thought to function as a coat complex required for sorting of specific membrane proteins to the primary cilia. The BBSome complex is required for ciliogenesis but is dispensable for centriolar satellite function. Required for proper BBSome complex assembly and its ciliary localization. May be required for microtubule anchoring at the centrosome but not for microtubule nucleation. May be required for the dynein-mediated transport of pericentriolar proteins to the centrosome. Required, redundantly with bbs-5, for cilia biogenesis and both the assembly and movement of intraflagellar transport proteins along the ciliary axoneme. Plays a role in the removal of degraded mechanosensory receptors within the cilia. The sequence is that of BBSome complex member bbs-4 from Caenorhabditis elegans.